Consider the following 211-residue polypeptide: MLRRSKNSSTNTNADTKKRQSMHLGSKSSLISLTSEFGHGHSKTKQKKEEGTAPSQFLSPTNKRSTSSQSKLKRSSLLLDETLLKDYHSAMRHMQTNAAKEEKLRMAPSPTQSTRSESDASLSSTKSSISSIFSQDNDYSIHDLLYEDIEEMDKTDAFKINNTIAIDDSKALFVFCSNDSSSRTASIETLHESNLDNLDMGSSRRTSLDFF.

Disordered regions lie at residues 1 to 73 and 96 to 123; these read MLRR…SKLK and TNAA…ASLS. 2 stretches are compositionally biased toward polar residues: residues 26–35 and 53–62; these read SKSSLISLTS and APSQFLSPTN. Low complexity predominate over residues 63–73; sequence KRSTSSQSKLK. At S182 the chain carries Phosphoserine. T184 bears the Phosphothreonine mark. At S186 the chain carries Phosphoserine.

This is an uncharacterized protein from Saccharomyces cerevisiae (strain ATCC 204508 / S288c) (Baker's yeast).